The following is a 588-amino-acid chain: MEPPIGFRASLFQFLLFLPYFIGLLFLGFIKGIVLCPLVCLVVTIGNSAVILSLLPVHIVWTFYSIVSAKQVGPILKIFLCLCLPAAIILWPIVGILGSVLGGALYGFFSPIFATFDAVGEGKPYQFFHCFYDGTWSTMQRSFTVVRDFKDVCFHSYFSLMDELKQSCPDRKYYEIRLLQLPGALVVSVLGILVDPPVISLVAICKSPYMLFKGWHRLFHDLIGREGPFLETMCVPIAGLAILLWPLAVTGAVIGSVISSIFLGAYAGVVSYQESSFYYGLCYIVASVSIYDEYSTDILDLPEGSCFPRPKYRRKDEEPTPFSGPVPRLGSVKNASSMRGGSVRVPMIDIKPLDLLNELFVECRRYGEVLATKGLINSKDIEEARSSKGSQVISVGLPAYGLLYEILRSVKANSSGLLLSDGVTEITTMNRPKDVFFDWFLNPFLILKEQMKATNLSEEEEEYLGRLVLLFGDPERLKSSNAISASPPLTERKRAELDAFARRMQGLTKTVSRYPTFRRHFVALVKKLSEDLDLKDNNSAKDESITEPPAPVKIISRIFSQRSFRRKGSVNGSDQESQKGVSRNVDIV.

Helical transmembrane passes span 14-34, 49-69, 78-98, 184-204, 235-255, 257-274, and 275-292; these read FLLF…KGIV, AVIL…IVSA, IFLC…GILG, ALVV…LVAI, VPIA…AVIG, VISS…SYQE, and SSFY…SIYD. The residue at position 486 (Ser486) is a Phosphoserine. The tract at residues 566 to 588 is disordered; it reads RKGSVNGSDQESQKGVSRNVDIV. A compositionally biased stretch (polar residues) spans 570–581; it reads VNGSDQESQKGV.

The protein localises to the membrane. This is an uncharacterized protein from Arabidopsis thaliana (Mouse-ear cress).